A 1127-amino-acid polypeptide reads, in one-letter code: Major DNA-binding protein (1127 aa).

The required for nuclear localization stretch occupies residues 1098 to 1127; the sequence is QVKLTSMDHSGKVVGGKKRKIATMFDDLDL.

This sequence belongs to the herpesviridae major DNA-binding protein family. Homooligomers. Forms double-helical filaments necessary for the formation of replication compartments within the host nucleus. Interacts with the origin-binding protein. Interacts with the helicase primase complex; this interaction stimulates primer synthesis activity of the helicase-primase complex. Interacts with the DNA polymerase. Interacts with the alkaline exonuclease; this interaction increases its nuclease processivity.

The protein localises to the host nucleus. Plays several crucial roles in viral infection. Participates in the opening of the viral DNA origin to initiate replication by interacting with the origin-binding protein. May disrupt loops, hairpins and other secondary structures present on ssDNA to reduce and eliminate pausing of viral DNA polymerase at specific sites during elongation. Promotes viral DNA recombination by performing strand-transfer, characterized by the ability to transfer a DNA strand from a linear duplex to a complementary single-stranded DNA circle. Can also catalyze the renaturation of complementary single strands. Additionally, reorganizes the host cell nucleus, leading to the formation of prereplicative sites and replication compartments. This process is driven by the protein which can form double-helical filaments in the absence of DNA. This chain is Major DNA-binding protein, found in Alcelaphine herpesvirus 1 (strain C500) (AlHV-1).